Consider the following 591-residue polypeptide: Adsorption protein P2 (591 aa).

An intrachain disulfide couples Cys-254 to Cys-277.

It localises to the virion. Adsorption protein. In association with P31 and trimeric P5, forms the spike complexes located at the 5-fold vertices of the capsid. Involved in recognition and attachment to the receptor on the surface of the host. Likely triggers the processes of vertex disassembly, membrane tube formation, and subsequent DNA injection. Essential for viral infectivity. This chain is Adsorption protein P2 (II), found in Acinetobacter calcoaceticus (Arthrobacter siderocapsulatus).